A 489-amino-acid chain; its full sequence is Pup--protein ligase (489 aa).

Glu-25 is a Mg(2+) binding site. Residue Arg-69 coordinates ATP. Tyr-71 lines the Mg(2+) pocket. Catalysis depends on Asp-73, which acts as the Proton acceptor. Glu-79 serves as a coordination point for Mg(2+). Thr-82 and Trp-447 together coordinate ATP.

Belongs to the Pup ligase/Pup deamidase family. Pup-conjugating enzyme subfamily.

The enzyme catalyses ATP + [prokaryotic ubiquitin-like protein]-L-glutamate + [protein]-L-lysine = ADP + phosphate + N(6)-([prokaryotic ubiquitin-like protein]-gamma-L-glutamyl)-[protein]-L-lysine.. Its pathway is protein degradation; proteasomal Pup-dependent pathway. It participates in protein modification; protein pupylation. In terms of biological role, catalyzes the covalent attachment of the prokaryotic ubiquitin-like protein modifier Pup to the proteasomal substrate proteins, thereby targeting them for proteasomal degradation. This tagging system is termed pupylation. The ligation reaction involves the side-chain carboxylate of the C-terminal glutamate of Pup and the side-chain amino group of a substrate lysine. The chain is Pup--protein ligase from Corynebacterium efficiens (strain DSM 44549 / YS-314 / AJ 12310 / JCM 11189 / NBRC 100395).